Reading from the N-terminus, the 346-residue chain is Putative agmatine deiminase (346 aa).

Catalysis depends on Cys333, which acts as the Amidino-cysteine intermediate.

It belongs to the agmatine deiminase family.

The catalysed reaction is agmatine + H2O = N-carbamoylputrescine + NH4(+). The polypeptide is Putative agmatine deiminase (Legionella pneumophila (strain Paris)).